The following is a 141-amino-acid chain: MAAKKVVKQIKLQVEAGKANPAPPVGPALGQAGLNIMEFCKQFNERSKNQMGLKLPVVITVYSDRSFTFVTKSPPAALLVMKALGLQGGSATPHTVKVGTIKRAQLEEIAKTKMEDLNANDMDAAVKIIAGTCRSMGVNVE.

It belongs to the universal ribosomal protein uL11 family. As to quaternary structure, part of the ribosomal stalk of the 50S ribosomal subunit. Interacts with L10 and the large rRNA to form the base of the stalk. L10 forms an elongated spine to which L12 dimers bind in a sequential fashion forming a multimeric L10(L12)X complex. One or more lysine residues are methylated.

In terms of biological role, forms part of the ribosomal stalk which helps the ribosome interact with GTP-bound translation factors. In Leptospira biflexa serovar Patoc (strain Patoc 1 / Ames), this protein is Large ribosomal subunit protein uL11.